A 253-amino-acid chain; its full sequence is DNA repair protein RecO (253 aa).

The protein belongs to the RecO family.

Involved in DNA repair and RecF pathway recombination. The polypeptide is DNA repair protein RecO (Symbiobacterium thermophilum (strain DSM 24528 / JCM 14929 / IAM 14863 / T)).